A 171-amino-acid chain; its full sequence is Adenine phosphoribosyltransferase (171 aa).

Belongs to the purine/pyrimidine phosphoribosyltransferase family. Homodimer.

It localises to the cytoplasm. The enzyme catalyses AMP + diphosphate = 5-phospho-alpha-D-ribose 1-diphosphate + adenine. It participates in purine metabolism; AMP biosynthesis via salvage pathway; AMP from adenine: step 1/1. In terms of biological role, catalyzes a salvage reaction resulting in the formation of AMP, that is energically less costly than de novo synthesis. This chain is Adenine phosphoribosyltransferase, found in Christiangramia forsetii (strain DSM 17595 / CGMCC 1.15422 / KT0803) (Gramella forsetii).